Reading from the N-terminus, the 789-residue chain is Larval serum protein 1 beta chain (789 aa).

Positions 1–16 (MKIAIALLACLGLAAA) are cleaved as a signal peptide.

The protein belongs to the hemocyanin family. Heterohexamer, composed of three subunits, alpha, beta and gamma. In terms of tissue distribution, larval hemolymph.

The protein localises to the secreted. Its subcellular location is the extracellular space. Larval storage protein (LSP) which may serve as a store of amino acids for synthesis of adult proteins. This is Larval serum protein 1 beta chain (Lsp1beta) from Drosophila melanogaster (Fruit fly).